The following is a 1363-amino-acid chain: DNA-directed RNA polymerase subunit beta (1363 aa).

It belongs to the RNA polymerase beta chain family. In terms of assembly, the RNAP catalytic core consists of 2 alpha, 1 beta, 1 beta' and 1 omega subunit. When a sigma factor is associated with the core the holoenzyme is formed, which can initiate transcription.

It carries out the reaction RNA(n) + a ribonucleoside 5'-triphosphate = RNA(n+1) + diphosphate. DNA-dependent RNA polymerase catalyzes the transcription of DNA into RNA using the four ribonucleoside triphosphates as substrates. The sequence is that of DNA-directed RNA polymerase subunit beta from Pelagibacter ubique (strain HTCC1062).